Consider the following 524-residue polypeptide: Leucine-rich repeat-containing protein 1 (524 aa).

LRR repeat units lie at residues 11–34, 35–58, 60–81, 83–105, 107–126, 127–149, 150–172, 173–196, 198–218, 219–242, 244–264, 265–288, 290–310, 311–334, 336–356, 357–380, and 382–405; these read NRHV…IYRY, ARSL…FFQL, KLRK…IANF, QLVE…SFCK, LQVA…SFPE, LQNL…NIGN, LYNL…SLTQ, LRRL…IGAL, HLKD…EIGN, LKNL…ISGL, SLTD…GIGK, LKKL…VGEC, SLTE…SIGK, LKKL…IGGC, SLTV…EVSQ, ATEL…LTAL, and LKAL…TDYT. A Phosphothreonine modification is found at Thr480. Positions 484-512 form a coiled coil; sequence GELKHMKKTVENLRNDMNAAKGLDSNKNE.

As to quaternary structure, interacts with DLG1 and DLG4. May form a complex with DLG1 and ERBIN, where interaction between LRRC1 and ERBIN is indirect. In terms of tissue distribution, expressed strongly in testis and placenta, followed by heart, lung, kidney, thyroid, trachea, colon, prostate and pancreas.

The protein localises to the cytoplasm. It is found in the membrane. In Homo sapiens (Human), this protein is Leucine-rich repeat-containing protein 1 (LRRC1).